The sequence spans 159 residues: V-type proton ATPase 16 kDa proteolipid subunit c (159 aa).

Over 1 to 11 (MSEEGSPMYSP) the chain is Lumenal. Residues 12 to 32 (FFGVMGAASAMVFSALGAAYG) form a helical membrane-spanning segment. Over 33 to 54 (TAKSGVGISAMSVMRPELIMKC) the chain is Cytoplasmic. A helical transmembrane segment spans residues 55 to 75 (IIPVVMAGIIAIYGLVVAVLI). Residues 76-93 (AGKLDEAPTYTLYQGFVH) are Lumenal-facing. Residues 94–114 (MGAGLSVGLSGLAAGFAIGIV) traverse the membrane as a helical segment. Over 115–132 (GDAGVRGTAQQPRLYVGM) the chain is Cytoplasmic. A helical transmembrane segment spans residues 133–153 (ILILIFAEVLGLYGLIVAIFL). At 154-159 (YTKTSS) the chain is on the lumenal side.

This sequence belongs to the V-ATPase proteolipid subunit family. In terms of assembly, V-ATPase is a heteromultimeric enzyme made up of two complexes: the ATP-hydrolytic V1 complex and the proton translocation V0 complex. The V1 complex consists of three catalytic AB heterodimers that form a heterohexamer, three peripheral stalks each consisting of EG heterodimers, one central rotor including subunits D and F, and the regulatory subunits C and H. The proton translocation complex V0 consists of the proton transport subunit a, a ring of proteolipid subunits c9c'', rotary subunit d, subunits e and f, and two accessory subunits.

It localises to the vacuole membrane. Functionally, proton-conducting pore forming subunit of the V0 complex of vacuolar(H+)-ATPase (V-ATPase), a multisubunit enzyme composed of a peripheral complex (V1) that hydrolyzes ATP and a membrane integral complex (V0) that translocates protons. V-ATPase is responsible for acidifying and maintaining the pH of intracellular compartments and in some cell types, is targeted to the plasma membrane, where it is responsible for acidifying the extracellular environment. The polypeptide is V-type proton ATPase 16 kDa proteolipid subunit c (Nephrops norvegicus (Norway lobster)).